The sequence spans 194 residues: Ion-translocating oxidoreductase complex subunit A (194 aa).

A run of 6 helical transmembrane segments spans residues 5-25 (VLILISAVLVNNFVLVQFLGL), 47-67 (FVLTLSSVLAYLTWAYILVPF), 72-92 (LRTISFILVIAVAVQFTEMFV), 102-122 (VLGVFLPLITSNCAVLGVALL), 135-155 (LTYGFGAAIGFSLVLILFAAM), and 172-192 (SIGLITAGLMSLAFMGFSGLI).

This sequence belongs to the NqrDE/RnfAE family. As to quaternary structure, the complex is composed of six subunits: RnfA, RnfB, RnfC, RnfD, RnfE and RnfG.

Its subcellular location is the cell inner membrane. Part of a membrane-bound complex that couples electron transfer with translocation of ions across the membrane. The chain is Ion-translocating oxidoreductase complex subunit A from Alcanivorax borkumensis (strain ATCC 700651 / DSM 11573 / NCIMB 13689 / SK2).